Reading from the N-terminus, the 147-residue chain is Large ribosomal subunit protein bL9 (147 aa).

Belongs to the bacterial ribosomal protein bL9 family.

In terms of biological role, binds to the 23S rRNA. This is Large ribosomal subunit protein bL9 from Campylobacter jejuni subsp. jejuni serotype O:6 (strain 81116 / NCTC 11828).